A 168-amino-acid chain; its full sequence is Phosphopantetheine adenylyltransferase (168 aa).

S9 provides a ligand contact to substrate. ATP-binding positions include 9-10 (SF) and H17. K41, L73, and R87 together coordinate substrate. Residues 88–90 (GMR), E98, and 123–129 (WIYTSSS) each bind ATP.

It belongs to the bacterial CoaD family. Homohexamer. Mg(2+) serves as cofactor.

The protein resides in the cytoplasm. The enzyme catalyses (R)-4'-phosphopantetheine + ATP + H(+) = 3'-dephospho-CoA + diphosphate. The protein operates within cofactor biosynthesis; coenzyme A biosynthesis; CoA from (R)-pantothenate: step 4/5. Its function is as follows. Reversibly transfers an adenylyl group from ATP to 4'-phosphopantetheine, yielding dephospho-CoA (dPCoA) and pyrophosphate. This chain is Phosphopantetheine adenylyltransferase, found in Desulfosudis oleivorans (strain DSM 6200 / JCM 39069 / Hxd3) (Desulfococcus oleovorans).